A 202-amino-acid polypeptide reads, in one-letter code: uncharacterized protein (202 aa).

The chain crosses the membrane as a helical span at residues 18–38; it reads FLIFLIFLSVLGCGITISGCI.

It is found in the membrane. This is an uncharacterized protein from Methanocaldococcus jannaschii (strain ATCC 43067 / DSM 2661 / JAL-1 / JCM 10045 / NBRC 100440) (Methanococcus jannaschii).